The sequence spans 122 residues: 5'-AMP-activated protein kinase subunit beta-1 (122 aa).

Phosphoserine occurs at positions 5, 61, 66, and 73. The glycogen-binding domain stretch occupies residues 33–122; sequence EVNDKASAQA…TVNNIIQVKK (90 aa). T113 bears the Phosphothreonine mark.

Belongs to the 5'-AMP-activated protein kinase beta subunit family. AMPK is a heterotrimer of an alpha catalytic subunit (PRKAA1 or PRKAA2), a beta (PRKAB1 or PRKAB2) and a gamma non-catalytic subunits (PRKAG1, PRKAG2 or PRKAG3). Interacts with FNIP1 and FNIP2. In terms of processing, phosphorylated when associated with the catalytic subunit (PRKAA1 or PRKAA2). Phosphorylated by ULK1; leading to negatively regulate AMPK activity and suggesting the existence of a regulatory feedback loop between ULK1 and AMPK.

Non-catalytic subunit of AMP-activated protein kinase (AMPK), an energy sensor protein kinase that plays a key role in regulating cellular energy metabolism. In response to reduction of intracellular ATP levels, AMPK activates energy-producing pathways and inhibits energy-consuming processes: inhibits protein, carbohydrate and lipid biosynthesis, as well as cell growth and proliferation. AMPK acts via direct phosphorylation of metabolic enzymes, and by longer-term effects via phosphorylation of transcription regulators. Also acts as a regulator of cellular polarity by remodeling the actin cytoskeleton; probably by indirectly activating myosin. Beta non-catalytic subunit acts as a scaffold on which the AMPK complex assembles, via its C-terminus that bridges alpha (PRKAA1 or PRKAA2) and gamma subunits (PRKAG1, PRKAG2 or PRKAG3). The protein is 5'-AMP-activated protein kinase subunit beta-1 (PRKAB1) of Sus scrofa (Pig).